We begin with the raw amino-acid sequence, 210 residues long: Tetraspanin-31 (210 aa).

Over 1 to 12 (MVCGGFACSKNA) the chain is Cytoplasmic. Residues 13-33 (LCALNVVYMLVGLLLIGVAAW) traverse the membrane as a helical segment. At 34-44 (AKGLGLVSSIH) the chain is on the extracellular side. The chain crosses the membrane as a helical span at residues 45 to 65 (IIGGVIAVGVFLLLIAVAGLV). Residues 66–72 (GAVNHHQ) lie on the Cytoplasmic side of the membrane. A helical transmembrane segment spans residues 73–93 (VLLFFYMIILGLVFIFQFGIS). Topologically, residues 94–173 (CSCLAINLSK…FLKHSDEALK (80 aa)) are extracellular. Asparagine 100, asparagine 109, asparagine 117, and asparagine 134 each carry an N-linked (GlcNAc...) asparagine glycan. A helical membrane pass occupies residues 174 to 194 (ILGGVGLFFSFTEILGVWLAM). Residues 195–210 (RFRNQKDPRANPSAFL) lie on the Cytoplasmic side of the membrane.

This sequence belongs to the tetraspanin (TM4SF) family.

The protein resides in the membrane. The chain is Tetraspanin-31 (TSPAN31) from Bos taurus (Bovine).